A 423-amino-acid polypeptide reads, in one-letter code: MITKISLILFAVLLVSGLEEEERWKRSLQPGAPNVNNNDQPWQVSPHISRDDSGNTKTDINVQRHGENNDFEAGWSKVVRGPNKAKPTWHIGGTHRWRRSLQPGAPNINNKDQPWQVSPHISRDDNGNTRTNINVQRHGENNDFEAGWSKVVRGPNKAKPTWHIGGTHRWRRSLQPGAPNVNNKDQPWQVSPHISRDDSGNTRTNINVQRHGENNDFEAGWSKVVRGPNKAKPTWHIGGTHRWRRSLQPGAPNVNNKDQPWQVSPHISRDDSGNTNTDINLQRHGENHDFDAGWSKVVRGPNKAKPTWHVGGTYRWRRSVDIPHASTDNVDETFWEFDPHTEDDDDKPVLRLRRSDDEDEEEEEDQPWQLNPNIARGDDGNTRADVNIKRRGENHDFEAGWSKVVDGPDRAKPTWHVGGTFRW.

An N-terminal signal peptide occupies residues 1 to 17 (MITKISLILFAVLLVSG). Residues 18 to 26 (LEEEERWKR) constitute a propeptide that is removed on maturation. Disordered stretches follow at residues 28–58 (LQPGAPNVNNNDQPWQVSPHISRDDSGNTKT), 108–128 (INNKDQPWQVSPHISRDDNGN), 180–203 (NVNNKDQPWQVSPHISRDDSGNTR), and 355–385 (SDDEDEEEEEDQPWQLNPNIARGDDGNTRAD). A compositionally biased stretch (polar residues) spans 34–43 (NVNNNDQPWQ). The span at 180-189 (NVNNKDQPWQ) shows a compositional bias: polar residues. A compositionally biased stretch (acidic residues) spans 357 to 366 (DEDEEEEEDQ). The span at 376-385 (RGDDGNTRAD) shows a compositional bias: basic and acidic residues.

It belongs to the coleoptericin family. In terms of tissue distribution, hemolymph (at protein level). Larval fat body.

Its subcellular location is the secreted. Functionally, acaloleptins A1-A4 show antibacterial activity against Gram-negative bacteria but not against Gram-positive bacteria. Acaloleptin A5 shows antibacterial activity against Gram-positive bacteria but not against Gram-negative bacteria, and may also have antifungal activity. The chain is Acaloleptin A from Acalolepta luxuriosa (Udo longhorn beetle).